A 131-amino-acid chain; its full sequence is Proline-rich protein 3 (131 aa).

Residues 1-77 (LHRGPPGSRG…KEQRNPRRLK (77 aa)) form a disordered region. Positions 12–25 (MIPPLLSLPPPPRG) are enriched in pro residues. The span at 28–44 (PLRGGLGPRSGPYGRGW) shows a compositional bias: gly residues. A C3H1-type zinc finger spans residues 98 to 126 (KSDRPVCRHFAKKGHCRYEDLCAFYHPGA).

The polypeptide is Proline-rich protein 3 (PRR3) (Sus scrofa (Pig)).